Here is a 192-residue protein sequence, read N- to C-terminus: Xanthine phosphoribosyltransferase (192 aa).

Residues Leu-20 and Asn-27 each coordinate xanthine. A 5-phospho-alpha-D-ribose 1-diphosphate-binding site is contributed by 128-132; that stretch reads ANGQA. Lys-156 provides a ligand contact to xanthine.

Belongs to the purine/pyrimidine phosphoribosyltransferase family. Xpt subfamily. Homodimer.

It is found in the cytoplasm. It catalyses the reaction XMP + diphosphate = xanthine + 5-phospho-alpha-D-ribose 1-diphosphate. The protein operates within purine metabolism; XMP biosynthesis via salvage pathway; XMP from xanthine: step 1/1. Functionally, converts the preformed base xanthine, a product of nucleic acid breakdown, to xanthosine 5'-monophosphate (XMP), so it can be reused for RNA or DNA synthesis. The polypeptide is Xanthine phosphoribosyltransferase (Listeria monocytogenes serotype 4b (strain F2365)).